The sequence spans 709 residues: Elongation factor G (709 aa).

The region spanning Asn10–Glu295 is the tr-type G domain. Residues Ala19–Thr26, Asp91–His95, and Asn145–Asp148 contribute to the GTP site.

Belongs to the TRAFAC class translation factor GTPase superfamily. Classic translation factor GTPase family. EF-G/EF-2 subfamily.

The protein resides in the cytoplasm. In terms of biological role, catalyzes the GTP-dependent ribosomal translocation step during translation elongation. During this step, the ribosome changes from the pre-translocational (PRE) to the post-translocational (POST) state as the newly formed A-site-bound peptidyl-tRNA and P-site-bound deacylated tRNA move to the P and E sites, respectively. Catalyzes the coordinated movement of the two tRNA molecules, the mRNA and conformational changes in the ribosome. This Bifidobacterium animalis subsp. lactis (strain AD011) protein is Elongation factor G.